A 396-amino-acid polypeptide reads, in one-letter code: Pinosylvin synthase 2 (396 aa).

60–63 (KFKR) is a substrate binding site. Cys170 is an active-site residue. Residues Leu273 and 311–313 (GGR) each bind substrate.

This sequence belongs to the thiolase-like superfamily. Chalcone/stilbene synthases family. Homodimer.

It is found in the cytoplasm. It catalyses the reaction (E)-cinnamoyl-CoA + 3 malonyl-CoA + 3 H(+) = (E)-pinosylvin + 4 CO2 + 4 CoA. The catalysed reaction is 3-phenylpropanoyl-CoA + 3 malonyl-CoA + 3 H(+) = dihydropinosylvin + 4 CO2 + 4 CoA. The protein operates within phytoalexin biosynthesis; pinosylvin biosynthesis. Functionally, catalyzes the production of pinosylvin from cinnamoyl-CoA and malonyl-CoA, and dihydropinosylvin from dihydrocinnamoyl-CoA. This Pinus strobus (Eastern white pine) protein is Pinosylvin synthase 2.